Reading from the N-terminus, the 149-residue chain is Large ribosomal subunit protein bL9 (149 aa).

It belongs to the bacterial ribosomal protein bL9 family.

In terms of biological role, binds to the 23S rRNA. The sequence is that of Large ribosomal subunit protein bL9 from Enterobacter sp. (strain 638).